Here is a 600-residue protein sequence, read N- to C-terminus: Methionine--tRNA ligase (600 aa).

The short motif at 11-21 (PYANGPRHIGH) is the 'HIGH' region element. Zn(2+) contacts are provided by Cys143, Cys146, Cys156, and Cys159. A 'KMSKS' region motif is present at residues 350 to 354 (QFSSS). Residue Ser353 participates in ATP binding.

This sequence belongs to the class-I aminoacyl-tRNA synthetase family. MetG type 1 subfamily. As to quaternary structure, monomer. The cofactor is Zn(2+).

It localises to the cytoplasm. The catalysed reaction is tRNA(Met) + L-methionine + ATP = L-methionyl-tRNA(Met) + AMP + diphosphate. In terms of biological role, is required not only for elongation of protein synthesis but also for the initiation of all mRNA translation through initiator tRNA(fMet) aminoacylation. This is Methionine--tRNA ligase from Kineococcus radiotolerans (strain ATCC BAA-149 / DSM 14245 / SRS30216).